The chain runs to 758 residues: 5-methyltetrahydropteroyltriglutamate--homocysteine methyltransferase (758 aa).

Residues 16 to 19 (RELK) and Lys-116 each bind 5-methyltetrahydropteroyltri-L-glutamate. L-homocysteine contacts are provided by residues 436 to 438 (IGS) and Glu-489. L-methionine contacts are provided by residues 436–438 (IGS) and Glu-489. 5-methyltetrahydropteroyltri-L-glutamate is bound by residues 520-521 (RC) and Trp-566. Residue Asp-604 coordinates L-homocysteine. Asp-604 lines the L-methionine pocket. Residue Glu-610 participates in 5-methyltetrahydropteroyltri-L-glutamate binding. Residues His-646, Cys-648, and Glu-670 each contribute to the Zn(2+) site. His-699 functions as the Proton donor in the catalytic mechanism. Cys-731 provides a ligand contact to Zn(2+).

Belongs to the vitamin-B12 independent methionine synthase family. Zn(2+) is required as a cofactor.

It carries out the reaction 5-methyltetrahydropteroyltri-L-glutamate + L-homocysteine = tetrahydropteroyltri-L-glutamate + L-methionine. The protein operates within amino-acid biosynthesis; L-methionine biosynthesis via de novo pathway; L-methionine from L-homocysteine (MetE route): step 1/1. Its function is as follows. Catalyzes the transfer of a methyl group from 5-methyltetrahydrofolate to homocysteine resulting in methionine formation. The protein is 5-methyltetrahydropteroyltriglutamate--homocysteine methyltransferase of Xylella fastidiosa (strain M23).